Here is a 423-residue protein sequence, read N- to C-terminus: Cyclin-B2-1 (423 aa).

The tract at residues 1 to 61 (MDRASENRRL…EKSGKEEQKP (61 aa)) is disordered. Basic and acidic residues predominate over residues 49–60 (PMLEKSGKEEQK).

It belongs to the cyclin family. Cyclin AB subfamily. Interacts with CDKB2-1. In terms of tissue distribution, expressed in the intercalary meristem and the elongation zone of internodes. Expressed in adventitious roots at all nodes under submergence conditions.

In terms of biological role, involved in the control of the cell cycle at the G2/M (mitosis) transition. May activate CDKB2-1 kinase. In Oryza sativa subsp. indica (Rice), this protein is Cyclin-B2-1 (CYCB2-1).